The sequence spans 302 residues: Ornithine carbamoyltransferase (302 aa).

Residues 52 to 55 (STRT), Q79, R103, and 130 to 133 (HPCQ) each bind carbamoyl phosphate. L-ornithine is bound by residues N161, D221, and 225-226 (SM). Carbamoyl phosphate-binding positions include 261-262 (CL) and R289.

This sequence belongs to the aspartate/ornithine carbamoyltransferase superfamily. OTCase family.

The protein resides in the cytoplasm. The enzyme catalyses carbamoyl phosphate + L-ornithine = L-citrulline + phosphate + H(+). The protein operates within amino-acid biosynthesis; L-arginine biosynthesis; L-arginine from L-ornithine and carbamoyl phosphate: step 1/3. Its function is as follows. Reversibly catalyzes the transfer of the carbamoyl group from carbamoyl phosphate (CP) to the N(epsilon) atom of ornithine (ORN) to produce L-citrulline. The sequence is that of Ornithine carbamoyltransferase from Syntrophotalea carbinolica (strain DSM 2380 / NBRC 103641 / GraBd1) (Pelobacter carbinolicus).